The primary structure comprises 172 residues: ATP synthase subunit b (172 aa).

The helical transmembrane segment at 5–24 (LLMLLLLGSVSLFANEAAAS) threads the bilayer.

It belongs to the ATPase B chain family. F-type ATPases have 2 components, F(1) - the catalytic core - and F(0) - the membrane proton channel. F(1) has five subunits: alpha(3), beta(3), gamma(1), delta(1), epsilon(1). F(0) has three main subunits: a(1), b(2) and c(10-14). The alpha and beta chains form an alternating ring which encloses part of the gamma chain. F(1) is attached to F(0) by a central stalk formed by the gamma and epsilon chains, while a peripheral stalk is formed by the delta and b chains.

It is found in the cell inner membrane. F(1)F(0) ATP synthase produces ATP from ADP in the presence of a proton or sodium gradient. F-type ATPases consist of two structural domains, F(1) containing the extramembraneous catalytic core and F(0) containing the membrane proton channel, linked together by a central stalk and a peripheral stalk. During catalysis, ATP synthesis in the catalytic domain of F(1) is coupled via a rotary mechanism of the central stalk subunits to proton translocation. Its function is as follows. Component of the F(0) channel, it forms part of the peripheral stalk, linking F(1) to F(0). This Nitratiruptor sp. (strain SB155-2) protein is ATP synthase subunit b.